A 407-amino-acid polypeptide reads, in one-letter code: Argininosuccinate synthase (407 aa).

Residues 12-20 (AFSGGLDTS) and Ala39 each bind ATP. Residues Tyr90 and Ser95 each coordinate L-citrulline. Gly120 provides a ligand contact to ATP. Residues Thr122, Asn126, and Asp127 each coordinate L-aspartate. Position 126 (Asn126) interacts with L-citrulline. Residues Arg130, Ser181, Ser190, Glu266, and Tyr278 each contribute to the L-citrulline site.

Belongs to the argininosuccinate synthase family. Type 1 subfamily. As to quaternary structure, homotetramer.

The protein localises to the cytoplasm. It catalyses the reaction L-citrulline + L-aspartate + ATP = 2-(N(omega)-L-arginino)succinate + AMP + diphosphate + H(+). Its pathway is amino-acid biosynthesis; L-arginine biosynthesis; L-arginine from L-ornithine and carbamoyl phosphate: step 2/3. The chain is Argininosuccinate synthase from Nitrosospira multiformis (strain ATCC 25196 / NCIMB 11849 / C 71).